The chain runs to 320 residues: ATP-dependent 6-phosphofructokinase (320 aa).

An ATP-binding site is contributed by glycine 12. ADP is bound by residues 22–26 and 55–60; these read RGVVR and RYSVSD. ATP-binding positions include 73–74 and 103–106; these read RF and GDGS. Aspartate 104 is a binding site for Mg(2+). 126–128 is a substrate binding site; the sequence is TID. The active-site Proton acceptor is the aspartate 128. Arginine 155 is a binding site for ADP. Residues arginine 163 and 170 to 172 each bind substrate; that span reads MGR. ADP is bound by residues 186-188, lysine 212, and 214-216; these read GCE and KKH. Substrate contacts are provided by residues glutamate 223, arginine 244, and 250–253; that span reads HIQR.

The protein belongs to the phosphofructokinase type A (PFKA) family. ATP-dependent PFK group I subfamily. Prokaryotic clade 'B1' sub-subfamily. As to quaternary structure, homotetramer. It depends on Mg(2+) as a cofactor.

The protein resides in the cytoplasm. It carries out the reaction beta-D-fructose 6-phosphate + ATP = beta-D-fructose 1,6-bisphosphate + ADP + H(+). The protein operates within carbohydrate degradation; glycolysis; D-glyceraldehyde 3-phosphate and glycerone phosphate from D-glucose: step 3/4. Its activity is regulated as follows. Allosterically activated by ADP and other diphosphonucleosides, and allosterically inhibited by phosphoenolpyruvate. Its function is as follows. Catalyzes the phosphorylation of D-fructose 6-phosphate to fructose 1,6-bisphosphate by ATP, the first committing step of glycolysis. The polypeptide is ATP-dependent 6-phosphofructokinase (Buchnera aphidicola subsp. Baizongia pistaciae (strain Bp)).